A 612-amino-acid chain; its full sequence is Glutamine--fructose-6-phosphate aminotransferase [isomerizing] (612 aa).

C2 acts as the Nucleophile; for GATase activity in catalysis. A Glutamine amidotransferase type-2 domain is found at 2-217 (CGIVGGVAER…EGDIARLTRD (216 aa)). SIS domains follow at residues 283–428 (AEAD…VKEQ) and 461–602 (LSEL…VDQP). The active-site For Fru-6P isomerization activity is the K607.

As to quaternary structure, homodimer.

The protein localises to the cytoplasm. The enzyme catalyses D-fructose 6-phosphate + L-glutamine = D-glucosamine 6-phosphate + L-glutamate. Catalyzes the first step in hexosamine metabolism, converting fructose-6P into glucosamine-6P using glutamine as a nitrogen source. The sequence is that of Glutamine--fructose-6-phosphate aminotransferase [isomerizing] from Acinetobacter baylyi (strain ATCC 33305 / BD413 / ADP1).